The following is a 156-amino-acid chain: Ribosomal RNA large subunit methyltransferase H (156 aa).

S-adenosyl-L-methionine contacts are provided by residues Leu72, Gly104, and 123-128; that span reads FGKMVW.

It belongs to the RNA methyltransferase RlmH family. As to quaternary structure, homodimer.

It localises to the cytoplasm. It catalyses the reaction pseudouridine(1915) in 23S rRNA + S-adenosyl-L-methionine = N(3)-methylpseudouridine(1915) in 23S rRNA + S-adenosyl-L-homocysteine + H(+). Functionally, specifically methylates the pseudouridine at position 1915 (m3Psi1915) in 23S rRNA. This Ruegeria sp. (strain TM1040) (Silicibacter sp.) protein is Ribosomal RNA large subunit methyltransferase H.